A 406-amino-acid chain; its full sequence is S-adenosylmethionine synthase (406 aa).

Residue 140–145 coordinates ATP; the sequence is GRGSVD.

The protein belongs to the AdoMet synthase 2 family. It depends on Mg(2+) as a cofactor.

The catalysed reaction is L-methionine + ATP + H2O = S-adenosyl-L-methionine + phosphate + diphosphate. It participates in amino-acid biosynthesis; S-adenosyl-L-methionine biosynthesis; S-adenosyl-L-methionine from L-methionine: step 1/1. Its function is as follows. Catalyzes the formation of S-adenosylmethionine from methionine and ATP. This chain is S-adenosylmethionine synthase (mat), found in Aeropyrum pernix (strain ATCC 700893 / DSM 11879 / JCM 9820 / NBRC 100138 / K1).